Consider the following 76-residue polypeptide: Small ribosomal subunit protein bS18 (76 aa).

This sequence belongs to the bacterial ribosomal protein bS18 family. Part of the 30S ribosomal subunit. Forms a tight heterodimer with protein bS6.

Binds as a heterodimer with protein bS6 to the central domain of the 16S rRNA, where it helps stabilize the platform of the 30S subunit. The polypeptide is Small ribosomal subunit protein bS18 (Methylococcus capsulatus (strain ATCC 33009 / NCIMB 11132 / Bath)).